We begin with the raw amino-acid sequence, 320 residues long: Ferrochelatase (320 aa).

Fe cation is bound by residues His-194 and Glu-275.

Belongs to the ferrochelatase family.

It localises to the cytoplasm. The catalysed reaction is heme b + 2 H(+) = protoporphyrin IX + Fe(2+). Its pathway is porphyrin-containing compound metabolism; protoheme biosynthesis; protoheme from protoporphyrin-IX: step 1/1. In terms of biological role, catalyzes the ferrous insertion into protoporphyrin IX. In Vibrio atlanticus (strain LGP32) (Vibrio splendidus (strain Mel32)), this protein is Ferrochelatase.